We begin with the raw amino-acid sequence, 405 residues long: Protein NCA1 (405 aa).

Positions 1 to 85 (MTTTSVCPFS…GNLNKDSTDS (85 aa)) are disordered. 2 stretches are compositionally biased toward basic and acidic residues: residues 13 to 24 (ARPDDGSTRKQG) and 37 to 48 (ARPDDASARKQG). The span at 76-85 (GNLNKDSTDS) shows a compositional bias: polar residues. Residues 108 to 142 (CMLCQALLYESSRCVPCTHVFCKVCLTRFKDCPLC) form an RING-type zinc finger. TPR repeat units follow at residues 247-280 (GAVL…LMKL) and 292-325 (SVSL…RRDA).

Interacts with the catalases CAT1, CAT2 and CAT3. This interaction is not induced by alkaline stress or H(2)O(2) and NaCl treatments. Expressed in roots, stems, leaves, flowers and siliques.

The protein localises to the cytoplasm. The protein resides in the nucleus. Functionally, has holdase chaperone activity that may fold catalase to a functional structure. Not required for the peroxisome import of catalases. Required for the activity of catalases and acts mainly at the post-transcriptional level. This is Protein NCA1 from Arabidopsis thaliana (Mouse-ear cress).